Reading from the N-terminus, the 560-residue chain is MELPNHAKQLLLQLNQQRAKGYLCDVIIVVENALFRAHKNILAASSIYFKSLILHDNLINLDTDMVNPSVFRQVLDFIYTGKLLSSDQFSDHNFNALLTAASYLQLHDLAALCRKKLKRNGRSLLNKPTTPTNGRTSRNQRLSSTPVTPNQMSGLKDSEKTKRHEELIKDDLSEDEMFARNTHCTTSNSLSPSTSKNGSNGSCGMQELGLDLSKKSPSGSTATEEVSPSSIPQESPQSASESTANSASFDENPNTQNLTAGEPMELGVGECEESQPPPDVDQHKSSRQVTRQRRQPKSEGKKGEDMERVTLPNGVSKRLKVAGERLPAGGNGNSEVSFQCKDEEEGLENGQEQSEESGQSENEGGRNSANYVYRQEGFEPALGDNLYVCIPCGKGFPSSEELNAHVETHTEEELYIKEEDDDSYPKEDEVEAEDLSSQITQVHGTETRRFSCSVCNKSYKDPATLRQHEKTHWLTRPFPCNICGKMFTQRGTMTRHMRSHLGLKPFACEECGMRFTRQYRLTEHMRVHSGEKPYECQLCGGKFTQQRNLISHLRMHTSPS.

Positions 24–87 constitute a BTB domain; it reads CDVIIVVENA…IYTGKLLSSD (64 aa). 2 disordered regions span residues 122-163 and 183-367; these read RSLL…KTKR and HCTT…GGRN. Composition is skewed to polar residues over residues 126–153 and 183–203; these read NKPTTPTNGRTSRNQRLSSTPVTPNQMS and HCTTSNSLSPSTSKNGSNGSC. The segment covering 224–242 has biased composition (low complexity); it reads EEVSPSSIPQESPQSASES. The span at 243 to 259 shows a compositional bias: polar residues; it reads TANSASFDENPNTQNLT. Residues 296–308 are compositionally biased toward basic and acidic residues; sequence PKSEGKKGEDMER. The segment covering 348 to 362 has biased composition (low complexity); the sequence is ENGQEQSEESGQSEN. 5 C2H2-type zinc fingers span residues 387–409, 450–472, 478–500, 506–528, and 534–556; these read YVCIPCGKGFPSSEELNAHVETH, FSCSVCNKSYKDPATLRQHEKTH, FPCNICGKMFTQRGTMTRHMRSH, FACEECGMRFTRQYRLTEHMRVH, and YECQLCGGKFTQQRNLISHLRMH.

The protein belongs to the krueppel C2H2-type zinc-finger protein family. Hic subfamily.

Its subcellular location is the nucleus. Its function is as follows. Transcriptional repressor. In Danio rerio (Zebrafish), this protein is Hypermethylated in cancer 2 protein (hic2).